A 232-amino-acid chain; its full sequence is Large ribosomal subunit protein uL1 (232 aa).

This sequence belongs to the universal ribosomal protein uL1 family. As to quaternary structure, part of the 50S ribosomal subunit.

Its function is as follows. Binds directly to 23S rRNA. The L1 stalk is quite mobile in the ribosome, and is involved in E site tRNA release. Protein L1 is also a translational repressor protein, it controls the translation of the L11 operon by binding to its mRNA. The chain is Large ribosomal subunit protein uL1 from Methylorubrum extorquens (strain CM4 / NCIMB 13688) (Methylobacterium extorquens).